Consider the following 483-residue polypeptide: Acetyl-coenzyme A carboxylase carboxyl transferase subunit beta, chloroplastic (483 aa).

A CoA carboxyltransferase N-terminal domain is found at 219-483 (LWVQCENCYG…LHTFFPLNQN (265 aa)). The Zn(2+) site is built by C223, C226, C242, and C245. Residues 223–245 (CENCYGLNYKKFFKSKMNLCEQC) form a C4-type zinc finger.

The protein belongs to the AccD/PCCB family. Acetyl-CoA carboxylase is a heterohexamer composed of biotin carboxyl carrier protein, biotin carboxylase and 2 subunits each of ACCase subunit alpha and ACCase plastid-coded subunit beta (accD). Zn(2+) is required as a cofactor.

Its subcellular location is the plastid. It localises to the chloroplast stroma. It catalyses the reaction N(6)-carboxybiotinyl-L-lysyl-[protein] + acetyl-CoA = N(6)-biotinyl-L-lysyl-[protein] + malonyl-CoA. It functions in the pathway lipid metabolism; malonyl-CoA biosynthesis; malonyl-CoA from acetyl-CoA: step 1/1. Component of the acetyl coenzyme A carboxylase (ACC) complex. Biotin carboxylase (BC) catalyzes the carboxylation of biotin on its carrier protein (BCCP) and then the CO(2) group is transferred by the transcarboxylase to acetyl-CoA to form malonyl-CoA. The protein is Acetyl-coenzyme A carboxylase carboxyl transferase subunit beta, chloroplastic of Guizotia abyssinica (Niger).